The chain runs to 354 residues: Holliday junction branch migration complex subunit RuvB (354 aa).

The interval 1–24 is disordered; that stretch reads MSIQTDDFAPVPPPKRVVSAAPTS. The segment at 5 to 195 is large ATPase domain (RuvB-L); sequence TDDFAPVPPP…FGIVARLEFY (191 aa). ATP contacts are provided by residues Leu34, Arg35, Gly76, Lys79, Thr80, Thr81, 142-144, Arg185, Tyr195, and Arg232; that span reads EDY. Thr80 contributes to the Mg(2+) binding site. Residues 196-266 are small ATPAse domain (RuvB-S); sequence TPEELSRIVT…IAQRALAMLD (71 aa). The segment at 269–354 is head domain (RuvB-H); sequence PQGFDVMDRK…RQHTDLFGPA (86 aa). DNA is bound by residues Arg324 and Arg329.

The protein belongs to the RuvB family. Homohexamer. Forms an RuvA(8)-RuvB(12)-Holliday junction (HJ) complex. HJ DNA is sandwiched between 2 RuvA tetramers; dsDNA enters through RuvA and exits via RuvB. An RuvB hexamer assembles on each DNA strand where it exits the tetramer. Each RuvB hexamer is contacted by two RuvA subunits (via domain III) on 2 adjacent RuvB subunits; this complex drives branch migration. In the full resolvosome a probable DNA-RuvA(4)-RuvB(12)-RuvC(2) complex forms which resolves the HJ.

The protein resides in the cytoplasm. It carries out the reaction ATP + H2O = ADP + phosphate + H(+). In terms of biological role, the RuvA-RuvB-RuvC complex processes Holliday junction (HJ) DNA during genetic recombination and DNA repair, while the RuvA-RuvB complex plays an important role in the rescue of blocked DNA replication forks via replication fork reversal (RFR). RuvA specifically binds to HJ cruciform DNA, conferring on it an open structure. The RuvB hexamer acts as an ATP-dependent pump, pulling dsDNA into and through the RuvAB complex. RuvB forms 2 homohexamers on either side of HJ DNA bound by 1 or 2 RuvA tetramers; 4 subunits per hexamer contact DNA at a time. Coordinated motions by a converter formed by DNA-disengaged RuvB subunits stimulates ATP hydrolysis and nucleotide exchange. Immobilization of the converter enables RuvB to convert the ATP-contained energy into a lever motion, pulling 2 nucleotides of DNA out of the RuvA tetramer per ATP hydrolyzed, thus driving DNA branch migration. The RuvB motors rotate together with the DNA substrate, which together with the progressing nucleotide cycle form the mechanistic basis for DNA recombination by continuous HJ branch migration. Branch migration allows RuvC to scan DNA until it finds its consensus sequence, where it cleaves and resolves cruciform DNA. This Paracidovorax citrulli (strain AAC00-1) (Acidovorax citrulli) protein is Holliday junction branch migration complex subunit RuvB.